The following is a 428-amino-acid chain: CRISPR system endoribonuclease Csm6 (428 aa).

Positions 1–145 are CARF domain; it reads MKILISAVGT…RANREYTALT (145 aa). The interval 146–428 is HEPN domain; the sequence is ESEIDALIME…QNKELIKMLE (283 aa).

The protein belongs to the CRISPR-associated Csm6 family. In terms of assembly, homodimer. The composite ssRNase active site is formed at the dimer interface.

Non-specific ssRNase activity is allosterically activated about 1000-fold by cyclic hexaadenylate (cA6), a second messenger produced by Cas10 of the ternary Csm effector complex in the presence of a cognate target RNA. ssRNase activity is inhibited by physiological concentrations of ATP (1 mM), activity is restored by cOA. In terms of biological role, CRISPR (clustered regularly interspaced short palindromic repeat) is an adaptive immune system that provides protection against mobile genetic elements (viruses, transposable elements and conjugative plasmids). CRISPR clusters contain spacers, sequences complementary to antecedent mobile elements, and target invading nucleic acids. CRISPR clusters are transcribed and processed into CRISPR RNA (crRNA). The type III-A Csm complex binds crRNA and acts as a crRNA-guided RNase, DNase and cyclic oligoadenylate synthase; binding of target RNA cognate to the crRNA is required for all activities. In a heterologous host this Csm effector complex restricts ssRNA phage MS2, suggesting it may target RNA viruses in vivo. This protein is not part of the Csm complex. Its function is as follows. Csm functions as a non-specific ssDNase. Base-pairing between crRNA and target RNA to form a ternary Csm complex activates a ssDNase activity; target RNA cleavage suppresses the ssDNase, a temporal control that prevents uncontrolled DNA degradation. Viral RNA transcripts probably tether the Csm complex to the viral genome, recruiting Cas10 ssDNA activity which is able to degrade DNA in the transcription bubble, spatially controlling the DNase activity. A single-strand-specific endoribonuclease (ssRNase) that is approximately 1000-fold stimulated by cyclic oligoadenylate (cOA); although several species of cOA are synthesized by this organism only cyclic hexaadenylate (cA6) stimulates the ssRNase activity. Cleaves preferentially within GA or AA dinucleotides, although the presence of cA6 broadens the preference. Linear oligoadenylates do not activate the RNase. The polypeptide is CRISPR system endoribonuclease Csm6 (Streptococcus thermophilus).